Consider the following 449-residue polypeptide: Uridine-cytidine kinase C (449 aa).

58-65 (GPSGAGKT) contacts ATP. Residues 235–401 (NPIYILKSVK…QKSYIELYQD (167 aa)) enclose the CYTH domain.

It belongs to the uridine kinase family.

The enzyme catalyses uridine + ATP = UMP + ADP + H(+). It catalyses the reaction cytidine + ATP = CMP + ADP + H(+). The protein operates within pyrimidine metabolism; CTP biosynthesis via salvage pathway; CTP from cytidine: step 1/3. It functions in the pathway pyrimidine metabolism; UMP biosynthesis via salvage pathway; UMP from uridine: step 1/1. Its function is as follows. Catalyzes the conversion of uridine into uridine monophosphate and cytidine into cytidine monophosphate in the pyrimidine salvage pathway. The polypeptide is Uridine-cytidine kinase C (udkC) (Dictyostelium discoideum (Social amoeba)).